We begin with the raw amino-acid sequence, 365 residues long: MDNYEFSELLKTLKNKVGNIASIIKPENIQTRLKEIEELENSPSFWSDVKQAGIIGKEKTKITNLLKNYENAFNALNDASELFDLANSENDTETLEALFNDAPKLEDTITSLEISMLLSGENDGKNAIVSIHPGAGGTESNDWASILYRMYLRFCEREGFKVETLDFQEGEEAGLKDVSFLVKGENAYGYLKAENGIHRLVRTSPFDSAGRRHTSFSSVMVSPELDDDIEIEIEEKDIRIDYYRASGAGGQHVNKTESAVRITHFPTGIVVQCQNDRSQHKNKATAFKMLKSRLYELELMKQQDSANTGEKSEIGWGHQIRSYVLFPYQQVKDNRSGEAFSQVDNILDGDIKKMIEGVLIALKAE.

The residue at position 251 (Q251) is an N5-methylglutamine.

This sequence belongs to the prokaryotic/mitochondrial release factor family. In terms of processing, methylated by PrmC. Methylation increases the termination efficiency of RF2.

The protein resides in the cytoplasm. Peptide chain release factor 2 directs the termination of translation in response to the peptide chain termination codons UGA and UAA. The polypeptide is Peptide chain release factor 2 (Campylobacter jejuni subsp. jejuni serotype O:2 (strain ATCC 700819 / NCTC 11168)).